The primary structure comprises 333 residues: Protein RecA (333 aa).

69–76 is a binding site for ATP; the sequence is GPESSGKT.

Belongs to the RecA family.

It is found in the cytoplasm. In terms of biological role, can catalyze the hydrolysis of ATP in the presence of single-stranded DNA, the ATP-dependent uptake of single-stranded DNA by duplex DNA, and the ATP-dependent hybridization of homologous single-stranded DNAs. It interacts with LexA causing its activation and leading to its autocatalytic cleavage. The protein is Protein RecA of Mesoplasma florum (strain ATCC 33453 / NBRC 100688 / NCTC 11704 / L1) (Acholeplasma florum).